Reading from the N-terminus, the 628-residue chain is Carbon monoxide dehydrogenase 1 (628 aa).

C44, C52, C53, C56, C61, and C75 together coordinate [4Fe-4S] cluster. Positions 266, 302, 340, 448, 478, and 519 each coordinate [Ni-4Fe-5S] cluster.

Belongs to the Ni-containing carbon monoxide dehydrogenase family. Homodimer. The cofactor is [4Fe-4S] cluster. Requires [Ni-4Fe-5S] cluster as cofactor.

The enzyme catalyses CO + 2 oxidized [2Fe-2S]-[ferredoxin] + H2O = 2 reduced [2Fe-2S]-[ferredoxin] + CO2 + 2 H(+). In terms of biological role, CODH oxidizes carbon monoxide coupled, via CooF, to the reduction of a hydrogen cation by a hydrogenase (possibly CooH). In Methanosarcina mazei (strain ATCC BAA-159 / DSM 3647 / Goe1 / Go1 / JCM 11833 / OCM 88) (Methanosarcina frisia), this protein is Carbon monoxide dehydrogenase 1 (cooS1).